A 242-amino-acid chain; its full sequence is Uridylate kinase (242 aa).

16 to 19 (KVSG) contributes to the ATP binding site. Gly58 lines the UMP pocket. 2 residues coordinate ATP: Gly59 and Arg63. UMP is bound by residues Asp78 and 139 to 146 (TGNPFCTT). The ATP site is built by Thr166, Gln167, Tyr172, and Asp175.

This sequence belongs to the UMP kinase family. Homohexamer.

Its subcellular location is the cytoplasm. It catalyses the reaction UMP + ATP = UDP + ADP. It functions in the pathway pyrimidine metabolism; CTP biosynthesis via de novo pathway; UDP from UMP (UMPK route): step 1/1. Inhibited by UTP. Its function is as follows. Catalyzes the reversible phosphorylation of UMP to UDP. The chain is Uridylate kinase from Rickettsia canadensis (strain McKiel).